The following is a 517-amino-acid chain: uncharacterized protein (517 aa).

Helical transmembrane passes span 35-55, 81-101, 102-122, 135-155, 164-184, 223-243, 268-288, 302-322, 328-348, and 352-372; these read FSLIVLSFIVSFFLIVAIPGI, IAIYTLAALAFSFCMSVGVFN, IGISGQMMAGANFGFMMILKV, IITILLMILGSVTVAMVVAAL, VVSAIMLNWVIVLVSAYLVGT, LVIAIAAAIFIAVLMKFTVFG, FLSFVISGILSGLLAAVVYTA, FGITSVPITGFDGIAIGLIAL, IVIVSTIISFVTIGAKPAGLN, and ASLVLGIMMYFAAIYNLMIYI.

It is found in the cell membrane. This is an uncharacterized protein from Mycoplasma pneumoniae (strain ATCC 29342 / M129 / Subtype 1) (Mycoplasmoides pneumoniae).